A 146-amino-acid polypeptide reads, in one-letter code: Large ribosomal subunit protein uL13 (146 aa).

Belongs to the universal ribosomal protein uL13 family. In terms of assembly, part of the 50S ribosomal subunit.

Functionally, this protein is one of the early assembly proteins of the 50S ribosomal subunit, although it is not seen to bind rRNA by itself. It is important during the early stages of 50S assembly. The sequence is that of Large ribosomal subunit protein uL13 from Spiroplasma citri.